A 339-amino-acid polypeptide reads, in one-letter code: NADH-quinone oxidoreductase subunit H (339 aa).

Helical transmembrane passes span 9 to 29 (IFPL…LILC), 50 to 70 (PNVV…KLLF), 82 to 102 (ILFI…WAVI), 115 to 135 (VGVL…IIAG), 161 to 181 (MGLV…SGII), 187 to 207 (MPWW…ISVL), 235 to 255 (MGFA…SAMT), 275 to 295 (IPGF…FLWI), and 311 to 331 (GWKV…SVLV).

This sequence belongs to the complex I subunit 1 family. NDH-1 is composed of 14 different subunits. Subunits NuoA, H, J, K, L, M, N constitute the membrane sector of the complex.

It is found in the cell inner membrane. It carries out the reaction a quinone + NADH + 5 H(+)(in) = a quinol + NAD(+) + 4 H(+)(out). In terms of biological role, NDH-1 shuttles electrons from NADH, via FMN and iron-sulfur (Fe-S) centers, to quinones in the respiratory chain. The immediate electron acceptor for the enzyme in this species is believed to be ubiquinone. Couples the redox reaction to proton translocation (for every two electrons transferred, four hydrogen ions are translocated across the cytoplasmic membrane), and thus conserves the redox energy in a proton gradient. This subunit may bind ubiquinone. The polypeptide is NADH-quinone oxidoreductase subunit H (Rickettsia conorii (strain ATCC VR-613 / Malish 7)).